The primary structure comprises 61 residues: uncharacterized protein (61 aa).

Residues 24-60 (WMRYESERDEKLRMLERMRDELEAELEEIKREIERLR) are a coiled coil.

This is an uncharacterized protein from Archaeoglobus fulgidus (strain ATCC 49558 / DSM 4304 / JCM 9628 / NBRC 100126 / VC-16).